Here is a 129-residue protein sequence, read N- to C-terminus: Cytochrome b5 (129 aa).

The Cytochrome b5 heme-binding domain maps to 8-84; that stretch reads TTIYTHEEVA…LEKLYIGNLK (77 aa). Residues His43 and His67 each contribute to the heme site. The chain crosses the membrane as a helical span at residues 104 to 124; the sequence is GINFPLIAVGVFLAAFGVYYY.

The protein belongs to the cytochrome b5 family.

The protein localises to the endoplasmic reticulum membrane. It localises to the microsome membrane. Functionally, membrane bound hemoprotein which function as an electron carrier for several membrane bound oxygenases. The chain is Cytochrome b5 (Cytb5) from Candida tropicalis (Yeast).